A 390-amino-acid chain; its full sequence is Transforming growth factor beta-1 proprotein (390 aa).

The N-terminal stretch at 1-29 (MPPSGLRLLPLLLPLLWLLMLTPGRPVAG) is a signal peptide. Residues 30–74 (LSTCKTIDMELVKRKGIEAIRGQILSKLRLASPPSQGDVPPGPLP) form a straightjacket domain region. The arm domain stretch occupies residues 75-271 (EAILALYNST…ATPLERAQHL (197 aa)). 3 N-linked (GlcNAc...) asparagine glycosylation sites follow: Asn82, Asn136, and Asn176. Residues 226-252 (DSKDNTLQVDINGFSSGRRGDLATIHG) form a bowtie tail region. A Cell attachment site motif is present at residues 244–246 (RGD). Intrachain disulfides connect Cys285–Cys294, Cys293–Cys356, Cys322–Cys387, and Cys326–Cys389.

The protein belongs to the TGF-beta family. Homodimer; disulfide-linked. Interacts with the serine proteases, HTRA1 and HTRA3: the interaction with either inhibits TGFB1-mediated signaling and the HTRA protease activity is required for this inhibition. May interact with THSD4; this interaction may lead to sequestration by FBN1 microfibril assembly and attenuation of TGFB signaling. Interacts with CD109, DPT and ASPN. Interacts with EFEMP2. Interacts with TSKU; the interaction contributes to regulation of the hair cycle. Interacts with TGFBR3. In terms of assembly, homodimer; disulfide-linked. Interacts with transforming growth factor beta-1 (TGF-beta-1) chain; interaction is non-covalent and maintains TGF-beta-1 in a latent state; each latency-associated peptide (LAP) monomer interacts with TGF-beta-1 in the other monomer. Interacts with LTBP1; leading to regulation of TGF-beta-1 activation. Interacts with LRRC32/GARP; leading to regulation of TGF-beta-1 activation on the surface of activated regulatory T-cells (Tregs). Interacts with LRRC33/NRROS; leading to regulation of TGF-beta-1 activation in macrophages and microglia. Interacts (via cell attachment site) with integrins ITGAV and ITGB6 (ITGAV:ITGB6), leading to release of the active TGF-beta-1. Interacts with NREP; the interaction results in a decrease in TGFB1 autoinduction. Interacts with HSP90AB1; inhibits latent TGFB1 activation. As to quaternary structure, homodimer; disulfide-linked. Interacts with TGF-beta receptors (TGFBR1 and TGFBR2), leading to signal transduction. Transforming growth factor beta-1 proprotein: The precursor proprotein is cleaved in the Golgi apparatus by FURIN to form Transforming growth factor beta-1 (TGF-beta-1) and Latency-associated peptide (LAP) chains, which remain non-covalently linked, rendering TGF-beta-1 inactive. Post-translationally, N-glycosylated. Deglycosylation leads to activation of Transforming growth factor beta-1 (TGF-beta-1); mechanisms triggering deglycosylation-driven activation of TGF-beta-1 are however unclear.

It localises to the secreted. Its subcellular location is the extracellular space. The protein resides in the extracellular matrix. Transforming growth factor beta-1 proprotein: Precursor of the Latency-associated peptide (LAP) and Transforming growth factor beta-1 (TGF-beta-1) chains, which constitute the regulatory and active subunit of TGF-beta-1, respectively. Its function is as follows. Required to maintain the Transforming growth factor beta-1 (TGF-beta-1) chain in a latent state during storage in extracellular matrix. Associates non-covalently with TGF-beta-1 and regulates its activation via interaction with 'milieu molecules', such as LTBP1, LRRC32/GARP and LRRC33/NRROS, that control activation of TGF-beta-1. Interaction with LRRC33/NRROS regulates activation of TGF-beta-1 in macrophages and microglia. Interaction with LRRC32/GARP controls activation of TGF-beta-1 on the surface of activated regulatory T-cells (Tregs). Interaction with integrins (ITGAV:ITGB6 or ITGAV:ITGB8) results in distortion of the Latency-associated peptide chain and subsequent release of the active TGF-beta-1. In terms of biological role, multifunctional protein that regulates the growth and differentiation of various cell types and is involved in various processes, such as normal development, immune function, microglia function and responses to neurodegeneration. Activation into mature form follows different steps: following cleavage of the proprotein in the Golgi apparatus, Latency-associated peptide (LAP) and Transforming growth factor beta-1 (TGF-beta-1) chains remain non-covalently linked rendering TGF-beta-1 inactive during storage in extracellular matrix. At the same time, LAP chain interacts with 'milieu molecules', such as LTBP1, LRRC32/GARP and LRRC33/NRROS that control activation of TGF-beta-1 and maintain it in a latent state during storage in extracellular milieus. TGF-beta-1 is released from LAP by integrins (ITGAV:ITGB6 or ITGAV:ITGB8): integrin-binding to LAP stabilizes an alternative conformation of the LAP bowtie tail and results in distortion of the LAP chain and subsequent release of the active TGF-beta-1. Once activated following release of LAP, TGF-beta-1 acts by binding to TGF-beta receptors (TGFBR1 and TGFBR2), which transduce signal. While expressed by many cells types, TGF-beta-1 only has a very localized range of action within cell environment thanks to fine regulation of its activation by Latency-associated peptide chain (LAP) and 'milieu molecules'. Plays an important role in bone remodeling: acts as a potent stimulator of osteoblastic bone formation, causing chemotaxis, proliferation and differentiation in committed osteoblasts. Can promote either T-helper 17 cells (Th17) or regulatory T-cells (Treg) lineage differentiation in a concentration-dependent manner. At high concentrations, leads to FOXP3-mediated suppression of RORC and down-regulation of IL-17 expression, favoring Treg cell development. At low concentrations in concert with IL-6 and IL-21, leads to expression of the IL-17 and IL-23 receptors, favoring differentiation to Th17 cells. Stimulates sustained production of collagen through the activation of CREB3L1 by regulated intramembrane proteolysis (RIP). Mediates SMAD2/3 activation by inducing its phosphorylation and subsequent translocation to the nucleus. Positively regulates odontoblastic differentiation in dental papilla cells, via promotion of IPO7-mediated translocation of phosphorylated SMAD2 to the nucleus and subsequent transcription of target genes. Can induce epithelial-to-mesenchymal transition (EMT) and cell migration in various cell types. This is Transforming growth factor beta-1 proprotein (TGFB1) from Ovis aries (Sheep).